A 235-amino-acid polypeptide reads, in one-letter code: Large ribosomal subunit protein uL2 (235 aa).

The tract at residues 197-218 (VAMNPVDHPHGGGEGKTSGGRH) is disordered.

This sequence belongs to the universal ribosomal protein uL2 family. Part of the 50S ribosomal subunit. Forms a bridge to the 30S subunit in the 70S ribosome.

In terms of biological role, one of the primary rRNA binding proteins. Required for association of the 30S and 50S subunits to form the 70S ribosome, for tRNA binding and peptide bond formation. It has been suggested to have peptidyltransferase activity; this is somewhat controversial. Makes several contacts with the 16S rRNA in the 70S ribosome. The polypeptide is Large ribosomal subunit protein uL2 (rplB) (Carsonella ruddii (strain PV)).